The sequence spans 962 residues: Translation initiation factor IF-2 (962 aa).

Disordered regions lie at residues 122–263 (EVGV…EPAR), 293–327 (TEEVEVKEAPRKKRPRPEEFEKEAAERKAKGTRRK), and 341–362 (IAAQDDRGRLKGDKRRPFAKEP). The span at 156–173 (AVEPQTVVPPVAAPAAEV) shows a compositional bias: low complexity. Over residues 188–202 (KPPEEKETKVKHAEP) the composition is skewed to basic and acidic residues. A compositionally biased stretch (basic residues) spans 244–256 (RPKKAKKRRRKKV). Basic and acidic residues-rich tracts occupy residues 308–327 (RPEEFEKEAAERKAKGTRRK) and 344–362 (QDDRGRLKGDKRRPFAKEP). The 170-residue stretch at 455-624 (RRPPVITVMG…LLQAELLELK (170 aa)) folds into the tr-type G domain. The segment at 464–471 (GHVDHGKT) is G1. 464 to 471 (GHVDHGKT) is a binding site for GTP. A G2 region spans residues 489–493 (GITQH). The tract at residues 510–513 (DTPG) is G3. GTP contacts are provided by residues 510 to 514 (DTPGH) and 564 to 567 (NKVD). The interval 564–567 (NKVD) is G4. Positions 600–602 (SAK) are G5.

This sequence belongs to the TRAFAC class translation factor GTPase superfamily. Classic translation factor GTPase family. IF-2 subfamily.

The protein resides in the cytoplasm. Functionally, one of the essential components for the initiation of protein synthesis. Protects formylmethionyl-tRNA from spontaneous hydrolysis and promotes its binding to the 30S ribosomal subunits. Also involved in the hydrolysis of GTP during the formation of the 70S ribosomal complex. This is Translation initiation factor IF-2 from Syntrophobacter fumaroxidans (strain DSM 10017 / MPOB).